The primary structure comprises 257 residues: Granzyme M (257 aa).

An N-terminal signal peptide occupies residues 1-23 (MEACVSSLLVLALGALSVGSSFG). The propeptide at 24 to 25 (TQ) is activation peptide. One can recognise a Peptidase S1 domain in the interval 26–254 (IIGGREVIPH…YVSWIRKVTG (229 aa)). Cys-51 and Cys-67 are oxidised to a cystine. Active-site charge relay system residues include His-66 and Asp-111. Cystine bridges form between Cys-145–Cys-213, Cys-176–Cys-192, and Cys-203–Cys-230. N-linked (GlcNAc...) asparagine glycosylation occurs at Asn-177. Ser-207 acts as the Charge relay system in catalysis.

It belongs to the peptidase S1 family. Granzyme subfamily. As to expression, highly and constitutively expressed in activated natural killer (NK) cells.

The protein localises to the secreted. Its subcellular location is the cytoplasmic granule. Cleaves peptide substrates after methionine, leucine, and norleucine. Physiological substrates include EZR, alpha-tubulins and the apoptosis inhibitor BIRC5/Survivin. Promotes caspase activation and subsequent apoptosis of target cells. The protein is Granzyme M (GZMM) of Homo sapiens (Human).